Here is a 2198-residue protein sequence, read N- to C-terminus: MDEKVFVLKDFIRRQVPDIPELSYQKEALLSQVEVPMVLTEGFKLLSCLVEIESCRKNSCECNFEQKFVDTILSENGVVAPTLPKVIPDGYRFFNKTLILLETFVRVNPEEFEKKWKTDMAKLLSLKEDIHRTGITLVPVVDGRGNYNTDLLPDWATERFRWLLIDLLRESRGAPTMEIEDQEYHRLIHSLSKTSNQSLGFENIECLKRVHLNYEERLNEQLLKDIVGEVRESKIREELIKLKTWYREEIYRKGLGNFVQTDRKSLLQTLVLSSAHSDSLAPECPMCCSKILDLCYQLSMRIANQTSLENNFDEPPLPTTQIEKVYLSLLSACNKIKGKKVFNTRRNTLLFLDLIILNFVAHVYKTQPSEMETLKKAGLIIGEMLLLPNDRVLDILVARRLLLKKVESCCNWLDRCRHLLRKEEPVLWDCVSEFTNVPDFELLLSLAEELCSEKPVMHYKPPSSLIGDCAHKDLMSMSDGEFESLFKCLSHISLSLVNSMKTSFSSRLLVNEKDYKRYYGTVRLKECYVQRFFLRVGLYGLLFYQKTGEKSRCYSLYLSDKGNLVELGSFYSDPKRFFLPIFSEFVLLATCAEMLSWLDFDEKLVDAVTPLLKILVLSILSSPTKRSQTFLQGLRYFIMAYVNQAHHIQLMSKLAVECKSASDVLIQRLSVKIVDMVLSDGSDPDMHMTRKFKFVLNVSYLCHLITKETPDRLTDQIKCFEKFMEPKLEFGSLIVNPSLNGFLSKEQEDVMIEGVEKFFSKELLTVEDLKRPGVSRELLSYCVSLFNKGRLRVNGTLGTDPYRPSFTSTALDLSSNKSVVIPKLNEVGEIVSEYDKQKLVSTCITSMAERFKTKGRYNLDPDTIDFLIMRNLTNLLSARKLDSSKKEELSLLYEHLSEDVMKAFEEIKYEVEITLSKMRLSRELECGHKKPCTLEGVWAPFNVLKVIRSETSVHEIRDFDPDLLGEDVYEKLCVAVYDSPLRPTFFLEKPLDICPLELLLKNLTTKSYEDDEFFDCFKYILIQAGFDQRLGAYEHKNRSRLGLSEEAFRLKEDVRVSNRQSNSEAIADRLDKSFFTSAALRNLCFYSEESPTEYTCISPNVGNLKFGLSYKEQVGSNRELYVGDLNTKMMTRLVEDFTEAVANSMNYTCLNSEKEFERAICDMKMAVNNGDLCCSLDHSKWGPFMSPALFHAFFGALKFKISKTGEQVDLGPVLNVLKWHLHKAVEVPISVAEAYCTGMLKRRLGLMSLSCQSVCEEFFHQKLLLEEGVPSHIMSVLDMGQGILHNSSDLYGLITEQFINYCLDFLFDVIPVSYTSSDDQITTFKLPTMSSSEDGLDGFDWLELLCFHDFLSSKFNKFVSPKSVSGTFVAEFKSRFFVMGEETPLLTKFVSAALHNVKCKTPTQLAETIDTICDQCVANGVGIEIVTKISERVNRLIRYSGYPQTPFLAVEKQDVKDWTDGSRGYRLQRNIEHYLQGSEQLEFVRKCAKKVLLKIKKGQVFEEYLVQLIGKDGDDALKGFLSYAGCESDEIKDVLKYRWLNLSANGDLRLVLRTKLMSTRRVLEREQIPTLIKTLQSKLSKNFTKGVKKILAESINKSAFQSSVASGFIGFCKSMGSKCVRDGSGGFMYIREVLNKQRVCPCEICAQNPGIIFCSDALTLIPEFSRSILWDYFSLVLTNACELGEWVFSSVQPPKVPILLNNPNLFWAVKPRGTRLIEDQLGLGHVLQSVRRSYPKVFEEHLVPFMNDLQVSRTTDFTRLRYLDVCVALDMMNENLGIVSHLLKAKDNSIYIVKQSECAVAHIRQVEYVNQELGLSPQQICSNFKIQLVFSSMINPLVITTSVLKSFFWFNEVLNLEDESQIDVGELTDFTILIKKYNLNRAMMLDDLTMGYVVSTISEPTIHLVSLKRNSNSIVGEQNSEMLHGEQVEDMYSIVLHIQLEHKRHSTKYHLSRTVVYSYTVECETNITDIEKEPSLATVKNVVLRASGSIEGHQFLDGVNLVASQPIFTGKKVINLSELLADSEITETYKEGDAVGSILLNFGTFYEHIDDRYAYEIVGPECSDSPLVLDGGSILADGKKLSSIKVELTGDVILKALGALESEKEVQSLLTGLWPFIRINNLKVKMAQEDFLLMYEMHRESLLKSLEVFSEWCEFVDFSVCYSKSLRDLVISDSSGSLRLKGITCKPINLSNSVTEIE.

Residues 26–284 (KEALLSQVEV…AHSDSLAPEC (259 aa)) are endonuclease. Mn(2+) contacts are provided by E51, D89, and E102. K115 is a catalytic residue. The RdRp catalytic domain occupies 1161-1359 (CDMKMAVNNG…FLSSKFNKFV (199 aa)). D1319 serves as a coordination point for Mg(2+).

The protein belongs to the Bunyavirales RNA polymerase family. Homomultimer; the oligomeric structure is essential for the polymerase activity. Interacts with nucleoprotein N. Interacts with protein Z; this interaction inhibits viral transcription and replication, Z partially blocks the product exit tunnel for the releasing nascent RNA product. Mn(2+) is required as a cofactor. It depends on Mg(2+) as a cofactor.

It is found in the virion. The protein localises to the host cytoplasm. It catalyses the reaction RNA(n) + a ribonucleoside 5'-triphosphate = RNA(n+1) + diphosphate. In terms of biological role, RNA-dependent RNA polymerase, which is responsible for the replication and transcription of the viral RNA genome using antigenomic RNA as an intermediate. During transcription, synthesizes subgenomic RNAs and assures their capping by a cap-snatching mechanism, which involves the endonuclease activity cleaving the host capped pre-mRNAs. These short capped RNAs are then used as primers for viral transcription. The 3'-end of subgenomic mRNAs molecules are heterogeneous and not polyadenylated. The replicase function is to direct synthesis of antigenomic and genomic RNA which are encapsidated and non capped. As a consequence of the use of the same enzyme for both transcription and replication, these mechanisms need to be well coordinated. These processes may be regulated by proteins N and Z in a dose-dependent manner. Z protein inhibits the viral polymerase L und thus the viral transcription and RNA synthesis. In Homo sapiens (Human), this protein is RNA-directed RNA polymerase L.